We begin with the raw amino-acid sequence, 250 residues long: NADH-quinone oxidoreductase subunit B 2 (250 aa).

Residues C41, C42, C107, and C137 each contribute to the [4Fe-4S] cluster site.

This sequence belongs to the complex I 20 kDa subunit family. In terms of assembly, NDH-1 is composed of 14 different subunits. Subunits NuoB, C, D, E, F, and G constitute the peripheral sector of the complex. [4Fe-4S] cluster serves as cofactor.

The protein localises to the cell membrane. It carries out the reaction a quinone + NADH + 5 H(+)(in) = a quinol + NAD(+) + 4 H(+)(out). Its function is as follows. NDH-1 shuttles electrons from NADH, via FMN and iron-sulfur (Fe-S) centers, to quinones in the respiratory chain. The immediate electron acceptor for the enzyme in this species is believed to be ubiquinone. Couples the redox reaction to proton translocation (for every two electrons transferred, four hydrogen ions are translocated across the cytoplasmic membrane), and thus conserves the redox energy in a proton gradient. This Herpetosiphon aurantiacus (strain ATCC 23779 / DSM 785 / 114-95) protein is NADH-quinone oxidoreductase subunit B 2.